The primary structure comprises 304 residues: Acetyl-coenzyme A carboxylase carboxyl transferase subunit beta (304 aa).

Residues 23 to 292 (VWTKCDSCGQ…PNPEAPREGV (270 aa)) form the CoA carboxyltransferase N-terminal domain. The Zn(2+) site is built by cysteine 27, cysteine 30, cysteine 46, and cysteine 49. The C4-type zinc finger occupies 27–49 (CDSCGQVLYRAELERNLEVCPKC). The interval 284–304 (NPEAPREGVVVPPVPDQEPEA) is disordered. The span at 295-304 (PPVPDQEPEA) shows a compositional bias: pro residues.

The protein belongs to the AccD/PCCB family. As to quaternary structure, acetyl-CoA carboxylase is a heterohexamer composed of biotin carboxyl carrier protein (AccB), biotin carboxylase (AccC) and two subunits each of ACCase subunit alpha (AccA) and ACCase subunit beta (AccD). The cofactor is Zn(2+).

It is found in the cytoplasm. The enzyme catalyses N(6)-carboxybiotinyl-L-lysyl-[protein] + acetyl-CoA = N(6)-biotinyl-L-lysyl-[protein] + malonyl-CoA. It participates in lipid metabolism; malonyl-CoA biosynthesis; malonyl-CoA from acetyl-CoA: step 1/1. Component of the acetyl coenzyme A carboxylase (ACC) complex. Biotin carboxylase (BC) catalyzes the carboxylation of biotin on its carrier protein (BCCP) and then the CO(2) group is transferred by the transcarboxylase to acetyl-CoA to form malonyl-CoA. The sequence is that of Acetyl-coenzyme A carboxylase carboxyl transferase subunit beta from Shigella boydii serotype 18 (strain CDC 3083-94 / BS512).